A 78-amino-acid chain; its full sequence is Large ribosomal subunit protein eL20 (78 aa).

Belongs to the eukaryotic ribosomal protein eL20 family. As to quaternary structure, part of the 50S ribosomal subunit. Binds 23S rRNA.

The sequence is that of Large ribosomal subunit protein eL20 from Nanoarchaeum equitans (strain Kin4-M).